A 106-amino-acid polypeptide reads, in one-letter code: Small ribosomal subunit protein bS16 (106 aa).

Belongs to the bacterial ribosomal protein bS16 family.

In Wolbachia pipientis wMel, this protein is Small ribosomal subunit protein bS16.